The chain runs to 481 residues: Pentatricopeptide repeat-containing protein At2g48000 (481 aa).

9 PPR repeats span residues 147-181, 187-221, 222-256, 257-287, 292-324, 328-362, 364-398, 399-433, and 434-469; these read TTSV…QDGP, SVST…NILP, DSST…LVKP, TLAT…VKRH, EIKL…LIPK, KPWL…GLQI, TDGI…GWKM, SRSM…KISR, and SKKT…GHDF.

This sequence belongs to the PPR family. P subfamily.

The chain is Pentatricopeptide repeat-containing protein At2g48000 from Arabidopsis thaliana (Mouse-ear cress).